A 268-amino-acid polypeptide reads, in one-letter code: MECNDPFVVALKDKGYSLVAYPKTSIRPLHIYEHTIKNAFKRIWIQSEAQPTSGFIKSLFSDKIHGAIGLSDGQGIDIDLRKTNSLSSAVAAKILESYFQDSAPSFDLAFENSSSVIFHIEEIITTDADEISLRNWLNDNQNELREIYKEEIKKGNFFVATSLLRAKKMRMQFERKNKGELGVDVSKIKNLPVDAKLESKIEGSTYDRLVFETPDEGIVFGVKLVRLFFSDNGILTIDKKQDFNRVLGENMALNLFTEIQDAGFIEVT.

The S-palmitoyl cysteine moiety is linked to residue C3. 4 beta stranded membrane passes run 78-94 (IDLR…AAKI), 103-121 (APSF…FHIE), 168-185 (KMRM…GVDV), and 195-211 (AKLE…RLVF). The C-terminal region stretch occupies residues 248-268 (GENMALNLFTEIQDAGFIEVT).

This sequence belongs to the bacterial gasdermin family. As to quaternary structure, monomer in solution. Forms large, homooligomeric ring-shaped pores when inserted in membranes. Post-translationally, cleavage by the adjacently encoded protease (G563DRAFT_02009) between Leu-247 and Gly-248 relieves autoinhibition, releasing the N-terminus which initiates loss of cell integrity. In terms of processing, palmitoylation helps stabilize the inactive state; may self-palmitoylate. Palmitoylation is not required for permeabilization of liposomes by the ring-like pores in vitro. Palmitoylation plays a significant role in pore formation.

It localises to the cytoplasm. Its subcellular location is the cell inner membrane. With respect to regulation, the full-length protein before cleavage is inactive: intramolecular interactions between the N-terminal domain and the C-terminal region, as well as the lipid modification, mediate autoinhibition. The pyroptosis-like-inducing activity is carried by the released N-terminal domain (gasdermin bGSDM, N-terminus). Its function is as follows. Precursor of a pore-forming protein involved in defense against bacteriophages. Cleavage of this precursor by its dedicated, neighboring protease (G563DRAFT_02009) releases the active moiety (gasdermin bGSDM, N-terminus) which inserts into membranes, forming pores and triggering cell death. Expression of bGSDM and its protease is highly toxic in E.coli. Cells expressing the gene pair stop dividing and lose membrane integrity. Both proteins are required to kill E.coli. Functionally, pore-forming protein that causes membrane permeabilization via a pyroptosis-like activity. Makes ring-like pores with walls about 50 Angstroms thick and an interior pore diameter of 200-300 Angstroms, when integrated in liposomes. The polypeptide is Gasdermin bGSDM (Runella zeae (strain ATCC BAA-293 / DSM 19591 / LMG 21438 / NS12)).